The sequence spans 273 residues: Putative pyruvate, phosphate dikinase regulatory protein (273 aa).

153 to 160 (GVSRTSKT) provides a ligand contact to ADP.

It belongs to the pyruvate, phosphate/water dikinase regulatory protein family. PDRP subfamily.

The catalysed reaction is N(tele)-phospho-L-histidyl/L-threonyl-[pyruvate, phosphate dikinase] + ADP = N(tele)-phospho-L-histidyl/O-phospho-L-threonyl-[pyruvate, phosphate dikinase] + AMP + H(+). It catalyses the reaction N(tele)-phospho-L-histidyl/O-phospho-L-threonyl-[pyruvate, phosphate dikinase] + phosphate + H(+) = N(tele)-phospho-L-histidyl/L-threonyl-[pyruvate, phosphate dikinase] + diphosphate. Its function is as follows. Bifunctional serine/threonine kinase and phosphorylase involved in the regulation of the pyruvate, phosphate dikinase (PPDK) by catalyzing its phosphorylation/dephosphorylation. The chain is Putative pyruvate, phosphate dikinase regulatory protein from Sinorhizobium fredii (strain NBRC 101917 / NGR234).